The primary structure comprises 281 residues: Undecaprenyl-diphosphatase (281 aa).

The next 7 helical transmembrane spans lie at 4 to 24 (ILLL…FLPI), 46 to 63 (AFEV…CWEF), 83 to 103 (FVLN…LFGK), 108 to 128 (VLFS…IIFW), 187 to 207 (AVAT…ATAY), 222 to 242 (EFTL…FVCV), and 257 to 277 (FAWY…TGLI).

Belongs to the UppP family.

The protein localises to the cell inner membrane. It catalyses the reaction di-trans,octa-cis-undecaprenyl diphosphate + H2O = di-trans,octa-cis-undecaprenyl phosphate + phosphate + H(+). Functionally, catalyzes the dephosphorylation of undecaprenyl diphosphate (UPP). Confers resistance to bacitracin. This is Undecaprenyl-diphosphatase from Polynucleobacter necessarius subsp. necessarius (strain STIR1).